We begin with the raw amino-acid sequence, 92 residues long: Small ribosomal subunit protein uS19 (92 aa).

It belongs to the universal ribosomal protein uS19 family.

In terms of biological role, protein S19 forms a complex with S13 that binds strongly to the 16S ribosomal RNA. In Borreliella afzelii (strain PKo) (Borrelia afzelii), this protein is Small ribosomal subunit protein uS19.